The chain runs to 860 residues: Protein argonaute-2 (860 aa).

3'-nitrotyrosine is present on tyrosine 2. In terms of domain architecture, PAZ spans 230 to 349 (PVIEFVCEVL…LPLEVCNIVA (120 aa)). An interaction with guide RNA region spans residues 312 to 317 (YFKDRH). The residue at position 388 (serine 388) is a Phosphoserine. The Piwi domain occupies 518–819 (LVVVILPGKT…VAFRARYHLV (302 aa)). The segment at 525 to 567 (GKTPVYAEVKRVGDTVLGMATQCVQMKNVQRTTPQTLSNLCLK) is interaction with guide RNA. The segment at 588–591 (FQQP) is interaction with GW182 family members. Aspartate 598 contributes to the a divalent metal cation binding site. Residues 651-661 (LIQFYKSTRFK) are interaction with GW182 family members. Aspartate 670 provides a ligand contact to a divalent metal cation. 4-hydroxyproline is present on proline 701. Interaction with guide RNA stretches follow at residues 710 to 711 (KR), 754 to 762 (HAGIQGTSR), and 791 to 813 (YVRC…VAFR). Residue histidine 808 participates in a divalent metal cation binding. Serine 825, serine 829, serine 832, and serine 835 each carry phosphoserine.

This sequence belongs to the argonaute family. Ago subfamily. In terms of assembly, interacts with DICER1 through its Piwi domain and with TARBP2 during assembly of the RNA-induced silencing complex (RISC). Together, DICER1, AGO2 and TARBP2 constitute the trimeric RISC loading complex (RLC), or micro-RNA (miRNA) loading complex (miRLC). Within the RLC/miRLC, DICER1 and TARBP2 are required to process precursor miRNAs (pre-miRNAs) to mature miRNAs and then load them onto AGO2. AGO2 bound to the mature miRNA constitutes the minimal RISC and may subsequently dissociate from DICER1 and TARBP2. Note however that the term RISC has also been used to describe the trimeric RLC/miRLC. The formation of RISC complexes containing siRNAs rather than miRNAs appears to occur independently of DICER1. Interacts with AGO1. Also interacts with DDB1, DDX5, DDX6, DDX20, DHX30, DHX36, DDX47, DHX9, ELAVL, FXR1, GEMIN4, HNRNPF, IGF2BP1, ILF3, IMP8, MATR3, PABPC1, PRMT5, P4HA1, P4HB, RBM4, SART3, TNRC6A, TNRC6B, UPF1 and YBX1. Interacts with the P-body components DCP1A and XRN1. Associates with polysomes and messenger ribonucleoproteins (mNRPs). Interacts with RBM4; the interaction is modulated under stress-induced conditions, occurs under both cell proliferation and differentiation conditions and in an RNA- and phosphorylation-independent manner. Interacts with LIMD1, WTIP and AJUBA. Interacts with TRIM71; the interaction increases in presence of RNA. Interacts with APOBEC3G in an RNA-dependent manner. Interacts with APOBEC3A, APOBEC3C, APOBEC3F and APOBEC3H. Interacts with DICER1, TARBP2, EIF6, MOV10 and RPL7A (60S ribosome subunit); they form a large RNA-induced silencing complex (RISC). Interacts with FMR1. Interacts with ZFP36. Interacts with RC3H1; the interaction is RNA independent. Found in a complex, composed of AGO2, CHD7 and ARB2A. Interacts with SND1 and SYT11. Interacts with CLNK. Interacts with GARRE1. Interacts with GRB2; this interaction is important for the formation of a ternary complex containing GRB2, AGO2 and DICER1. The cofactor is Mg(2+). Requires Mn(2+) as cofactor. In terms of processing, hydroxylated. 4-hydroxylation appears to enhance protein stability but is not required for miRNA-binding or endonuclease activity. Post-translationally, ubiquitinated on surface-exposed lysines by a SCF-like E3 ubiquitin-protein ligase complex containing ZSWIM8 during target-directed microRNA degradation (TDMD), a process that mediates degradation of microRNAs (miRNAs). Ubiquitination by the SCF-like E3 ubiquitin-protein ligase complex containing ZSWIM8 leads to its subsequent degradation, thereby exposing miRNAs for degradation. ZSWIM8 recognizes and binds AGO2 when it is engaged with a TDMD target. Phosphorylation at Ser-388 by AKT3; leads to up-regulate translational repression of microRNA target and down-regulate endonucleolytic cleavage. In terms of processing, a phosphorylation cycle of C-terminal serine cluster (Ser-825-Ser-835) regulates the release of target mRNAs. Target-binding leads to phosphorylation of these residues by CSNK1A1, which reduces the affinity of AGO2 for mRNA and enables target release. The ANKRD52-PPP6C phosphatase complex dephosphorylates the residues, which primes AGO2 for binding a new target.

The protein localises to the cytoplasm. It localises to the P-body. It is found in the nucleus. The enzyme catalyses Endonucleolytic cleavage to 5'-phosphomonoester.. Functionally, required for RNA-mediated gene silencing (RNAi) by the RNA-induced silencing complex (RISC). The 'minimal RISC' appears to include AGO2 bound to a short guide RNA such as a microRNA (miRNA) or short interfering RNA (siRNA). These guide RNAs direct RISC to complementary mRNAs that are targets for RISC-mediated gene silencing. The precise mechanism of gene silencing depends on the degree of complementarity between the miRNA or siRNA and its target. Binding of RISC to a perfectly complementary mRNA generally results in silencing due to endonucleolytic cleavage of the mRNA specifically by AGO2. Binding of RISC to a partially complementary mRNA results in silencing through inhibition of translation, and this is independent of endonuclease activity. May inhibit translation initiation by binding to the 7-methylguanosine cap, thereby preventing the recruitment of the translation initiation factor eIF4-E. May also inhibit translation initiation via interaction with EIF6, which itself binds to the 60S ribosomal subunit and prevents its association with the 40S ribosomal subunit. The inhibition of translational initiation leads to the accumulation of the affected mRNA in cytoplasmic processing bodies (P-bodies), where mRNA degradation may subsequently occur. In some cases RISC-mediated translational repression is also observed for miRNAs that perfectly match the 3' untranslated region (3'-UTR). Can also up-regulate the translation of specific mRNAs under certain growth conditions. Binds to the AU element of the 3'-UTR of the TNF (TNF-alpha) mRNA and up-regulates translation under conditions of serum starvation. Also required for transcriptional gene silencing (TGS), in which short RNAs known as antigene RNAs or agRNAs direct the transcriptional repression of complementary promoter regions. This is Protein argonaute-2 (Ago2) from Rattus norvegicus (Rat).